The primary structure comprises 318 residues: Aspartate carbamoyltransferase catalytic subunit (318 aa).

Residues R59 and T60 each coordinate carbamoyl phosphate. Residue K87 participates in L-aspartate binding. R109, H137, and Q140 together coordinate carbamoyl phosphate. Residues R170 and R224 each contribute to the L-aspartate site. Positions 265 and 266 each coordinate carbamoyl phosphate.

This sequence belongs to the aspartate/ornithine carbamoyltransferase superfamily. ATCase family. Heterododecamer (2C3:3R2) of six catalytic PyrB chains organized as two trimers (C3), and six regulatory PyrI chains organized as three dimers (R2).

The catalysed reaction is carbamoyl phosphate + L-aspartate = N-carbamoyl-L-aspartate + phosphate + H(+). It participates in pyrimidine metabolism; UMP biosynthesis via de novo pathway; (S)-dihydroorotate from bicarbonate: step 2/3. In terms of biological role, catalyzes the condensation of carbamoyl phosphate and aspartate to form carbamoyl aspartate and inorganic phosphate, the committed step in the de novo pyrimidine nucleotide biosynthesis pathway. The polypeptide is Aspartate carbamoyltransferase catalytic subunit (Rhizobium etli (strain ATCC 51251 / DSM 11541 / JCM 21823 / NBRC 15573 / CFN 42)).